Reading from the N-terminus, the 203-residue chain is Outer-membrane lipoprotein LolB (203 aa).

Residues 1 to 17 (MNRLFRLLPLASLVLTA) form the signal peptide. A lipid anchor (N-palmitoyl cysteine) is attached at C18. C18 carries the S-diacylglycerol cysteine lipid modification.

The protein belongs to the LolB family. In terms of assembly, monomer.

It localises to the cell outer membrane. In terms of biological role, plays a critical role in the incorporation of lipoproteins in the outer membrane after they are released by the LolA protein. This Klebsiella pneumoniae subsp. pneumoniae (strain ATCC 700721 / MGH 78578) protein is Outer-membrane lipoprotein LolB.